The chain runs to 310 residues: Syndecan-1 (310 aa).

An N-terminal signal peptide occupies residues 1–22 (MRRAALWLWLCALALSLQPALP). Over 23–254 (QIVATNLPPE…GLLDRKEVLG (232 aa)) the chain is Extracellular. Disordered regions lie at residues 27-100 (TNLP…EGPK) and 114-212 (LTAR…QDFT). Residues 32-42 (EDQDGSGDDSD) are compositionally biased toward acidic residues. O-linked (Xyl...) (chondroitin sulfate) serine glycosylation occurs at Ser-37. The N-linked (GlcNAc...) asparagine glycan is linked to Asn-43. O-linked (Xyl...) (heparan sulfate) serine glycosylation is found at Ser-45 and Ser-47. The segment covering 55–75 (ITLSQQTPSTWKDTQLLTAIP) has biased composition (polar residues). The segment covering 117-127 (REQEATPRPRE) has biased composition (basic and acidic residues). Residues 128-151 (TTQLPTTHLASTTTATTAQEPATS) show a composition bias toward low complexity. The segment covering 153 to 164 (PHRDMQPGHHET) has biased composition (basic and acidic residues). 2 O-linked (Xyl...) (chondroitin sulfate) serine glycosylation sites follow: Ser-206 and Ser-216. Residues 255–275 (GVIAGGLVGLIFAVCLVGFML) form a helical membrane-spanning segment. Over 276 to 310 (YRMKKKDEGSYSLEEPKQANGGAYQKPTKQEEFYA) the chain is Cytoplasmic. Residues 284–310 (GSYSLEEPKQANGGAYQKPTKQEEFYA) are disordered. Ser-285 carries the phosphoserine modification.

It belongs to the syndecan proteoglycan family. In terms of assembly, interacts with CDCP1. Interacts (via C-terminus) with TIAM1 (via PDZ domain). Interacts with MDK. Shedding is enhanced by a number of factors such as heparanase, thrombin or EGF. Also by stress and wound healing. PMA-mediated shedding is inhibited by TIMP3. As to expression, detected in placenta (at protein level). Detected in fibroblasts (at protein level).

Its subcellular location is the membrane. It localises to the secreted. The protein resides in the extracellular exosome. Cell surface proteoglycan that contains both heparan sulfate and chondroitin sulfate and that links the cytoskeleton to the interstitial matrix. Regulates exosome biogenesis in concert with SDCBP and PDCD6IP. Able to induce its own expression in dental mesenchymal cells and also in the neighboring dental epithelial cells via an MSX1-mediated pathway. The chain is Syndecan-1 from Homo sapiens (Human).